A 502-amino-acid polypeptide reads, in one-letter code: Protein DETOXIFICATION 7 (502 aa).

Transmembrane regions (helical) follow at residues 36–56 (MAAPMVAVSVSQFLLQVISMV), 68–88 (AVAIATSLTNVTGFSLIVGFA), 112–132 (YSSMLCLLVFCFSISIVWFFM), 143–163 (PLISQLACRYSIWLIPALFGF), 182–202 (LFVSSLGALCFHIPFCWLLVY), 208–228 (IVGAALSIGFSYWLNVFLLWI), 262–282 (AMMICLEWWSFEILLLMSGLL), 291–311 (VISICLTTSAVHFVLVNAIGA), 331–351 (AAVNSAIFLGGVGALITTITL), 375–395 (ITPILCLSIFVNSFLAVLSGV), 408–428 (ASLGSYYLVGIPLGWFLCFVM), and 436–456 (WIGILIASTIQLIVFALVTFF).

This sequence belongs to the multi antimicrobial extrusion (MATE) (TC 2.A.66.1) family.

The protein localises to the membrane. The protein is Protein DETOXIFICATION 7 of Arabidopsis thaliana (Mouse-ear cress).